We begin with the raw amino-acid sequence, 97 residues long: YcgL domain-containing protein Tcr_0238 (97 aa).

Residues Leu3 to Pro87 form the YcgL domain. The tract at residues Ser78–Phe97 is disordered.

This chain is YcgL domain-containing protein Tcr_0238, found in Hydrogenovibrio crunogenus (strain DSM 25203 / XCL-2) (Thiomicrospira crunogena).